Reading from the N-terminus, the 660-residue chain is Replication restart protein PriA (660 aa).

The Helicase ATP-binding domain occupies 145–313 (IIGSEKTNVF…KNNQIKKIIM (169 aa)). 158 to 165 (GIPGSGKT) contacts ATP. Residues 256-259 (DEEH) carry the DEAH box motif. Zn(2+) contacts are provided by cysteine 370, cysteine 373, cysteine 379, cysteine 382, cysteine 397, cysteine 400, cysteine 410, and cysteine 413. A Helicase C-terminal domain is found at 405-557 (KTASHCPQCE…QFYEEELDIR (153 aa)).

It belongs to the helicase family. PriA subfamily. In terms of assembly, component of the replication restart primosome. Zn(2+) serves as cofactor.

It catalyses the reaction Couples ATP hydrolysis with the unwinding of duplex DNA by translocating in the 3'-5' direction.. It carries out the reaction ATP + H2O = ADP + phosphate + H(+). In terms of biological role, initiates the restart of stalled replication forks, which reloads the replicative helicase on sites other than the origin of replication. Recognizes and binds to abandoned replication forks and remodels them to uncover a helicase loading site. Promotes assembly of the primosome at these replication forks. The protein is Replication restart protein PriA of Borreliella burgdorferi (strain ATCC 35210 / DSM 4680 / CIP 102532 / B31) (Borrelia burgdorferi).